The sequence spans 469 residues: DENN domain-containing protein 2D (469 aa).

The segment at L17–P44 is disordered. Residues E55 to T204 form the uDENN domain. Residues H226–G359 enclose the cDENN domain. The 85-residue stretch at G361–P445 folds into the dDENN domain.

The protein resides in the cytoplasm. Its function is as follows. Guanine nucleotide exchange factor (GEF) which may activate RAB9A and RAB9B. Promotes the exchange of GDP to GTP, converting inactive GDP-bound Rab proteins into their active GTP-bound form. This chain is DENN domain-containing protein 2D (Dennd2d), found in Mus musculus (Mouse).